The chain runs to 297 residues: Urease accessory protein UreD (297 aa).

This sequence belongs to the UreD family. UreD, UreF and UreG form a complex that acts as a GTP-hydrolysis-dependent molecular chaperone, activating the urease apoprotein by helping to assemble the nickel containing metallocenter of UreC. The UreE protein probably delivers the nickel.

It is found in the cytoplasm. Functionally, required for maturation of urease via the functional incorporation of the urease nickel metallocenter. The chain is Urease accessory protein UreD from Prochlorococcus marinus subsp. pastoris (strain CCMP1986 / NIES-2087 / MED4).